The following is a 390-amino-acid chain: MNIIKNFLQKESASGILIILAMILALILANNGVLNKFYSEILRLDSGIIFGEFKLIKPTILWVNDGLMAIFFFFIGLELKYEFLEGELNSISKVALPSIAGIGGVIVPAVIFYVLNHANRFDVNGWAIPTVSDTAFALAVLFLLGSRIPISLKLFLLSLAIIDDVAAIIIIAIFYTKTLSIISLFISFCAIVILTILNYKNNQNIYIYLLCGIVLWVSVLMSGIHATLAGIIASMFIPLRDEDGDPEHGMLQSVMHFLHPIVAFLILPIFAFSNAGVVFSEDSILNLTHPVPLGIIFGLFIGKQIGVFSFAFLAIKCKLAELPNGCGWLHLYGLSILTGVGMSMSLFIDGLAYAESDAFLYANKIAILLASTMCAVTGYFVLRKASKSQN.

11 consecutive transmembrane segments (helical) span residues 14–34 (SGIL…NGVL), 59–79 (TILW…GLEL), 94–114 (VALP…IFYV), 125–145 (GWAI…FLLG), 154–174 (LFLL…IAIF), 179–199 (LSII…ILNY), 205–225 (IYIY…SGIH), 260–280 (PIVA…VVFS), 295–315 (IIFG…FLAI), 328–348 (WLHL…SLFI), and 362–382 (ANKI…YFVL).

This sequence belongs to the NhaA Na(+)/H(+) (TC 2.A.33) antiporter family.

The protein localises to the cell inner membrane. It carries out the reaction Na(+)(in) + 2 H(+)(out) = Na(+)(out) + 2 H(+)(in). Na(+)/H(+) antiporter that extrudes sodium in exchange for external protons. This is Na(+)/H(+) antiporter NhaA 1 from Campylobacter fetus subsp. fetus (strain 82-40).